Consider the following 466-residue polypeptide: Adenosylhomocysteinase (466 aa).

3 residues coordinate substrate: threonine 57, aspartate 132, and glutamate 192. 193–195 (TTT) contributes to the NAD(+) binding site. Positions 222 and 226 each coordinate substrate. NAD(+) is bound by residues asparagine 227, 256–261 (GYGDVG), glutamate 279, asparagine 314, 335–337 (IGH), and asparagine 380.

Belongs to the adenosylhomocysteinase family. NAD(+) serves as cofactor.

Its subcellular location is the cytoplasm. It catalyses the reaction S-adenosyl-L-homocysteine + H2O = L-homocysteine + adenosine. Its pathway is amino-acid biosynthesis; L-homocysteine biosynthesis; L-homocysteine from S-adenosyl-L-homocysteine: step 1/1. Functionally, may play a key role in the regulation of the intracellular concentration of adenosylhomocysteine. In Rhizobium meliloti (strain 1021) (Ensifer meliloti), this protein is Adenosylhomocysteinase.